A 356-amino-acid chain; its full sequence is Non-functional pseudokinase ZRK15 (356 aa).

One can recognise a Protein kinase domain in the interval 62 to 356; that stretch reads NRVSELFDEI…SSSSCGETSL (295 aa). Residues 68–76 and lysine 94 contribute to the ATP site; that span reads FDEIPYDWY.

Belongs to the protein kinase superfamily. Ser/Thr protein kinase family. ZRK subfamily. In terms of assembly, interacts with RPP13L4/ZAR1.

This chain is Non-functional pseudokinase ZRK15, found in Arabidopsis thaliana (Mouse-ear cress).